We begin with the raw amino-acid sequence, 238 residues long: Phosphatidylcholine synthase (238 aa).

The Cytoplasmic portion of the chain corresponds to 1–16 (MPVNLSMTPINKAKAW). A helical membrane pass occupies residues 17-37 (GVHAVTASGVILALLALLALV). At 38–41 (DNKP) the chain is on the periplasmic side. The chain crosses the membrane as a helical span at residues 42-62 (QACLLWLGLALLVDGLDGTLA). The Cytoplasmic portion of the chain corresponds to 63–75 (RKYEVKEMLPHFD). The chain crosses the membrane as a helical span at residues 76 to 96 (GSVLDLVIDYLTYVFIPAIFI). Topologically, residues 97–104 (YRYIPLPE) are periplasmic. A helical membrane pass occupies residues 105–125 (HFELLAVGVILVSSLFCFCNV). Over 126–132 (NMKSTDN) the chain is Cytoplasmic. The helical transmembrane segment at 133 to 153 (YFVGFPAAWNVVAVYFYVLDL) threads the bilayer. Over 154 to 155 (HP) the chain is Periplasmic. The chain crosses the membrane as a helical span at residues 156–176 (WVNLATVLVLAALTLTRMKFL). Residues 177–183 (HPFRVRQ) lie on the Cytoplasmic side of the membrane. The helical transmembrane segment at 184–204 (FMPLNIAVTFVWLISSGLLIV) threads the bilayer. Residues 205-209 (QQPAD) are Periplasmic-facing. A helical transmembrane segment spans residues 210–230 (LPILLGLWFAASAYFVGICLW). Over 231-238 (RSAREWFG) the chain is Cytoplasmic.

This sequence belongs to the CDP-alcohol phosphatidyltransferase class-I family. The cofactor is Mn(2+).

Its subcellular location is the cell inner membrane. It carries out the reaction a CDP-1,2-diacyl-sn-glycerol + choline = a 1,2-diacyl-sn-glycero-3-phosphocholine + CMP + H(+). Its function is as follows. Condenses choline with CDP-diglyceride to produce phosphatidylcholine and CMP. The sequence is that of Phosphatidylcholine synthase from Pseudomonas aeruginosa (strain ATCC 15692 / DSM 22644 / CIP 104116 / JCM 14847 / LMG 12228 / 1C / PRS 101 / PAO1).